Reading from the N-terminus, the 934-residue chain is uncharacterized protein (934 aa).

Residues 1–24 (MKLKKRYLLLGSTLTVSAALILSA) form the signal peptide. C25 carries the N-palmitoyl cysteine lipid modification. C25 carries S-diacylglycerol cysteine lipidation. The tract at residues 111–131 (SGLKGRAQKNGSTDSSDGSSK) is disordered. The span at 119-131 (KNGSTDSSDGSSK) shows a compositional bias: polar residues.

The protein resides in the cell membrane. This is an uncharacterized protein from Mycoplasma genitalium (strain ATCC 33530 / DSM 19775 / NCTC 10195 / G37) (Mycoplasmoides genitalium).